Consider the following 394-residue polypeptide: Phosphoglycerate kinase (394 aa).

Substrate is bound by residues 21-23 (DFN), R36, 59-62 (HLGR), R118, and R151. The residue at position 183 (S183) is a Phosphoserine. ATP is bound by residues K201 and G292. T299 carries the phosphothreonine modification. Residues E323 and 350–353 (GGDS) contribute to the ATP site.

This sequence belongs to the phosphoglycerate kinase family. In terms of assembly, monomer.

It localises to the cytoplasm. It catalyses the reaction (2R)-3-phosphoglycerate + ATP = (2R)-3-phospho-glyceroyl phosphate + ADP. The protein operates within carbohydrate degradation; glycolysis; pyruvate from D-glyceraldehyde 3-phosphate: step 2/5. The polypeptide is Phosphoglycerate kinase (Bacillus cereus (strain Q1)).